A 429-amino-acid polypeptide reads, in one-letter code: Glutamate dehydrogenase B (429 aa).

The disordered stretch occupies residues 1 to 20 (MAQTPPPESAPSTDSEPETA). Residue lysine 119 is part of the active site.

The protein belongs to the Glu/Leu/Phe/Val dehydrogenases family. Homohexamer.

The protein is Glutamate dehydrogenase B (gdhB) of Halobacterium salinarum (strain ATCC 700922 / JCM 11081 / NRC-1) (Halobacterium halobium).